Reading from the N-terminus, the 316-residue chain is Pantothenate kinase (316 aa).

ATP is bound at residue 95-102; it reads GSVAVGKS.

Belongs to the prokaryotic pantothenate kinase family.

It is found in the cytoplasm. The catalysed reaction is (R)-pantothenate + ATP = (R)-4'-phosphopantothenate + ADP + H(+). The protein operates within cofactor biosynthesis; coenzyme A biosynthesis; CoA from (R)-pantothenate: step 1/5. The sequence is that of Pantothenate kinase from Shewanella sp. (strain ANA-3).